A 131-amino-acid chain; its full sequence is uncharacterized protein (131 aa).

The tract at residues 112–131 is disordered; the sequence is LTDNPGAVRKSQKSLIPPYN.

This is an uncharacterized protein from Fowl adenovirus A serotype 1 (strain CELO / Phelps) (FAdV-1).